The primary structure comprises 357 residues: Glycerol-1-phosphate dehydrogenase [NAD(P)+] (357 aa).

NAD(+) contacts are provided by residues 104–108 (GKTID) and 126–129 (TAAS). Aspartate 131 contacts substrate. NAD(+) is bound at residue serine 135. Aspartate 178 contacts substrate. Aspartate 178 and histidine 258 together coordinate Zn(2+). Residue histidine 262 participates in substrate binding. Zn(2+) is bound at residue histidine 274.

It belongs to the glycerol-1-phosphate dehydrogenase family. It depends on Zn(2+) as a cofactor.

Its subcellular location is the cytoplasm. The enzyme catalyses sn-glycerol 1-phosphate + NAD(+) = dihydroxyacetone phosphate + NADH + H(+). It catalyses the reaction sn-glycerol 1-phosphate + NADP(+) = dihydroxyacetone phosphate + NADPH + H(+). The protein operates within membrane lipid metabolism; glycerophospholipid metabolism. Functionally, catalyzes the NAD(P)H-dependent reduction of dihydroxyacetonephosphate (DHAP or glycerone phosphate) to glycerol 1-phosphate (G1P). The G1P thus generated is used as the glycerophosphate backbone of phospholipids in the cellular membranes of Archaea. This is Glycerol-1-phosphate dehydrogenase [NAD(P)+] from Methanococcoides burtonii (strain DSM 6242 / NBRC 107633 / OCM 468 / ACE-M).